A 421-amino-acid polypeptide reads, in one-letter code: Glucose-1-phosphate adenylyltransferase (421 aa).

Alpha-D-glucose 1-phosphate is bound by residues Tyr108, Gly173, 188-189 (EK), and Ser206.

It belongs to the bacterial/plant glucose-1-phosphate adenylyltransferase family. Homotetramer.

It catalyses the reaction alpha-D-glucose 1-phosphate + ATP + H(+) = ADP-alpha-D-glucose + diphosphate. It functions in the pathway glycan biosynthesis; glycogen biosynthesis. Its function is as follows. Involved in the biosynthesis of ADP-glucose, a building block required for the elongation reactions to produce glycogen. Catalyzes the reaction between ATP and alpha-D-glucose 1-phosphate (G1P) to produce pyrophosphate and ADP-Glc. In Mesorhizobium japonicum (strain LMG 29417 / CECT 9101 / MAFF 303099) (Mesorhizobium loti (strain MAFF 303099)), this protein is Glucose-1-phosphate adenylyltransferase.